Consider the following 91-residue polypeptide: Cell division topological specificity factor (91 aa).

The protein belongs to the MinE family.

Prevents the cell division inhibition by proteins MinC and MinD at internal division sites while permitting inhibition at polar sites. This ensures cell division at the proper site by restricting the formation of a division septum at the midpoint of the long axis of the cell. In Wigglesworthia glossinidia brevipalpis, this protein is Cell division topological specificity factor.